A 491-amino-acid polypeptide reads, in one-letter code: Ribulose-1,5 bisphosphate carboxylase/oxygenase large subunit N-methyltransferase, chloroplastic (491 aa).

Residues 67 to 291 (EGVVTTKTPV…AGDQLFIQYD (225 aa)) enclose the SET domain.

This sequence belongs to the class V-like SAM-binding methyltransferase superfamily. Plant protein-lysine LSMT methyltransferase family.

The protein resides in the plastid. The protein localises to the chloroplast. It carries out the reaction L-lysyl-[ribulose-1,5-bisphosphate carboxylase] + 3 S-adenosyl-L-methionine = N(6),N(6),N(6)-trimethyl-L-lysyl-[ribulose-1,5-bisphosphate carboxylase] + 3 S-adenosyl-L-homocysteine + 3 H(+). Its function is as follows. Methylates 'Lys-14' of the large subunit of RuBisCO. The sequence is that of Ribulose-1,5 bisphosphate carboxylase/oxygenase large subunit N-methyltransferase, chloroplastic (RBCMT) from Nicotiana tabacum (Common tobacco).